Consider the following 356-residue polypeptide: Heat-inducible transcription repressor HrcA (356 aa).

It belongs to the HrcA family.

Its function is as follows. Negative regulator of class I heat shock genes (grpE-dnaK-dnaJ and groELS operons). Prevents heat-shock induction of these operons. The protein is Heat-inducible transcription repressor HrcA of Brucella abortus (strain S19).